Here is a 229-residue protein sequence, read N- to C-terminus: Phosphatidylinositol N-acetylglucosaminyltransferase subunit GPI15 (229 aa).

The next 2 membrane-spanning stretches (helical) occupy residues 59-79 (IQYH…VICL) and 101-121 (ILII…GPSV).

This sequence belongs to the PIGH family. In terms of assembly, component of the phosphatidylinositol N-acetylglucosaminyltransferase (GPI-GlcNAc transferase) complex composed of at least GPI1, GPI2, GPI3, GPI15, GPI19 and ERI1.

The protein resides in the membrane. The catalysed reaction is a 1,2-diacyl-sn-glycero-3-phospho-(1D-myo-inositol) + UDP-N-acetyl-alpha-D-glucosamine = a 6-(N-acetyl-alpha-D-glucosaminyl)-1-(1,2-diacyl-sn-glycero-3-phospho)-1D-myo-inositol + UDP + H(+). It functions in the pathway glycolipid biosynthesis; glycosylphosphatidylinositol-anchor biosynthesis. In terms of biological role, part of the complex catalyzing the transfer of N-acetylglucosamine from UDP-N-acetylglucosamine to phosphatidylinositol, the first step of GPI biosynthesis. The polypeptide is Phosphatidylinositol N-acetylglucosaminyltransferase subunit GPI15 (GPI15) (Saccharomyces cerevisiae (strain ATCC 204508 / S288c) (Baker's yeast)).